The following is a 317-amino-acid chain: uncharacterized protein (317 aa).

7 helical membrane passes run 18-38 (WWII…LIII), 58-78 (IIFG…GFIF), 92-112 (FLGH…WWSV), 130-150 (LFAT…AFGV), 165-185 (QPLS…KGEL), 202-222 (LAFL…LSTV), and 253-273 (LWGG…LMVN).

The protein belongs to the CbiQ family.

It localises to the cell membrane. This is an uncharacterized protein from Mycoplasma pneumoniae (strain ATCC 29342 / M129 / Subtype 1) (Mycoplasmoides pneumoniae).